Here is a 293-residue protein sequence, read N- to C-terminus: Ribosomal protein L11 methyltransferase (293 aa).

4 residues coordinate S-adenosyl-L-methionine: T145, G166, D188, and N230.

The protein belongs to the methyltransferase superfamily. PrmA family.

It localises to the cytoplasm. It catalyses the reaction L-lysyl-[protein] + 3 S-adenosyl-L-methionine = N(6),N(6),N(6)-trimethyl-L-lysyl-[protein] + 3 S-adenosyl-L-homocysteine + 3 H(+). In terms of biological role, methylates ribosomal protein L11. This Shewanella baltica (strain OS185) protein is Ribosomal protein L11 methyltransferase.